The chain runs to 458 residues: MLKLIIPSIMLIPMTFLINKKSLLWTATTFFSFLIAALSTLTLNMDVAEHNSTNPLLSIDQFSCPLIMLSCWLLPLTIMGSQAHMKTEPITRQKTMISLLILLQVLLCITFGASNLLMFYIAFETTLIPTLLIITRWGNQKERLTAGLYFLFYTLSASLPLLLALIMIQTHLNSLSIYIIPLSNLTLLLNTPWSETLWWIACFLAFLIKMPLYIFHLWLPKAHVEAPIAGSMILAAILLKLGGYGMIRMSSLFIPLTKDLAVPFMIIAMWGMIVTSSICLRQTDLKSMIAYSSVSHMGLVVAGIFTMTPWAWSGALAMMIAHGLVSSGLLCLANITYERTHTRSIFMNRGLKTLFPLMSFWWLMMTFANMALPPFPNFMAEILIITSLFNWSNWTILLLGLSMTLTALFSLNMLIMTQHEHPNKHAPVNPSTTREHLLMLMHMAPIILLIANPSAIMI.

Transmembrane regions (helical) follow at residues 23-43, 59-79, 99-119, 148-168, 174-194, 197-217, 227-247, 260-280, 289-311, 315-337, 355-375, 396-416, and 438-458; these read LLWTATTFFSFLIAALSTLTL, IDQFSCPLIMLSCWLLPLTIM, LLILLQVLLCITFGASNLLMF, LYFLFYTLSASLPLLLALIMI, SLSIYIIPLSNLTLLLNTPWS, LWWIACFLAFLIKMPLYIFHL, PIAGSMILAAILLKLGGYGMI, LAVPFMIIAMWGMIVTSSICL, IAYSSVSHMGLVVAGIFTMTPWA, ALAMMIAHGLVSSGLLCLANITY, FPLMSFWWLMMTFANMALPPF, ILLLGLSMTLTALFSLNMLIM, and LMLMHMAPIILLIANPSAIMI.

Belongs to the complex I subunit 4 family.

It is found in the mitochondrion membrane. The catalysed reaction is a ubiquinone + NADH + 5 H(+)(in) = a ubiquinol + NAD(+) + 4 H(+)(out). Functionally, core subunit of the mitochondrial membrane respiratory chain NADH dehydrogenase (Complex I) that is believed to belong to the minimal assembly required for catalysis. Complex I functions in the transfer of electrons from NADH to the respiratory chain. The immediate electron acceptor for the enzyme is believed to be ubiquinone. The polypeptide is NADH-ubiquinone oxidoreductase chain 4 (MT-ND4) (Petromyzon marinus (Sea lamprey)).